A 213-amino-acid chain; its full sequence is Pyridoxine/pyridoxamine 5'-phosphate oxidase (213 aa).

Residues 60–65 (RMVLMK), 75–76 (YS), Lys-82, and Gln-104 each bind FMN. Lys-65 provides a ligand contact to substrate. Substrate is bound by residues Tyr-122, Arg-126, and Ser-130. FMN-binding positions include 139–140 (QS) and Trp-184. Substrate is bound at residue 190-192 (RLH). Arg-194 is an FMN binding site.

This sequence belongs to the pyridoxamine 5'-phosphate oxidase family. As to quaternary structure, homodimer. FMN is required as a cofactor.

It catalyses the reaction pyridoxamine 5'-phosphate + O2 + H2O = pyridoxal 5'-phosphate + H2O2 + NH4(+). The catalysed reaction is pyridoxine 5'-phosphate + O2 = pyridoxal 5'-phosphate + H2O2. Its pathway is cofactor metabolism; pyridoxal 5'-phosphate salvage; pyridoxal 5'-phosphate from pyridoxamine 5'-phosphate: step 1/1. The protein operates within cofactor metabolism; pyridoxal 5'-phosphate salvage; pyridoxal 5'-phosphate from pyridoxine 5'-phosphate: step 1/1. Its function is as follows. Catalyzes the oxidation of either pyridoxine 5'-phosphate (PNP) or pyridoxamine 5'-phosphate (PMP) into pyridoxal 5'-phosphate (PLP). In Rhodopseudomonas palustris (strain BisB18), this protein is Pyridoxine/pyridoxamine 5'-phosphate oxidase.